A 377-amino-acid chain; its full sequence is Leucine aminopeptidase A (377 aa).

Positions 1 to 18 (MRFLPCIATLAATASALA) are cleaved as a signal peptide. Positions 19–79 (IGDHVRSDDQ…SNKKQKLAVT (61 aa)) are excised as a propeptide. N-linked (GlcNAc...) asparagine glycosylation occurs at N87. Zn(2+)-binding residues include H176, D195, E234, and D261. N-linked (GlcNAc...) asparagine glycosylation occurs at N288. C310 and C314 are disulfide-bonded. Residue H343 coordinates Zn(2+).

This sequence belongs to the peptidase M28 family. M28E subfamily. As to quaternary structure, monomer. Zn(2+) serves as cofactor.

Its subcellular location is the secreted. Its activity is regulated as follows. Calcium, magnesium and manganese cations reduce peptidase activity to 20.3-51.3 percent. The metal ion chelating reagent EDTA almost completely inhibits activity. The protease inhibitor bacitracin and the aminopeptidase B inhibitor bestatin, as well as DTT and beta-mercaptoethanol act also as lap A inhibitorsD. Extracellular aminopeptidase that allows assimilation of proteinaceous substrates. This is Leucine aminopeptidase A (lapA) from Aspergillus oryzae (strain ATCC 42149 / RIB 40) (Yellow koji mold).